Here is a 372-residue protein sequence, read N- to C-terminus: MKIANGQTVIQLFERWSPKSLAVEGDKNGVLIGTLNKPIQRVLTALDVTESVIDEAIELGAELILAHHPIIFRPLSSIRTDTAYGRIIEKAIKHDLTIYAAHTNLDITKGGVNDLMADALGLKDIEVLAPTTTESLYKLVVFVPHTHTDQVREALGRAGAGHIGNYSYCTFNSKGTGTFKPEEGTNPFIGKQGALEFVEELKIETIVTEGQKNKVVAAMIKSHPYEEPAYDLYPLANEGETLGLGRIGYLHESMTLEEFAKQVKKAFDVPTARVVGSLETQIRKVAVLGGDGNKYMAHALRKGADVIVTGDVYYHVPHDALMDGLNIVDPGHNVEKIMKQGVKEKLEKLLKDKKYDTEVVASSVHTDPFTFI.

Residues His67, His68, Asp106, His332, and Glu335 each coordinate a divalent metal cation.

It belongs to the GTP cyclohydrolase I type 2/NIF3 family. In terms of assembly, homohexamer.

This Halalkalibacterium halodurans (strain ATCC BAA-125 / DSM 18197 / FERM 7344 / JCM 9153 / C-125) (Bacillus halodurans) protein is GTP cyclohydrolase 1 type 2 homolog.